The chain runs to 161 residues: Low molecular weight phosphotyrosine protein phosphatase (161 aa).

Cysteine 14 (nucleophile) is an active-site residue. Arginine 20 functions as the Transition state stabilizer in the catalytic mechanism. Serine 57 carries the post-translational modification Phosphoserine. The active-site Proton donor is the aspartate 133.

Belongs to the low molecular weight phosphotyrosine protein phosphatase family.

It is found in the cytoplasm. It catalyses the reaction O-phospho-L-tyrosyl-[protein] + H2O = L-tyrosyl-[protein] + phosphate. The enzyme catalyses a phosphate monoester + H2O = an alcohol + phosphate. Acts on tyrosine phosphorylated proteins, low-MW aryl phosphates and natural and synthetic acyl phosphates. The polypeptide is Low molecular weight phosphotyrosine protein phosphatase (Saccharomyces cerevisiae (strain ATCC 204508 / S288c) (Baker's yeast)).